The sequence spans 191 residues: Small ribosomal subunit protein uS5 (191 aa).

Positions 1-20 (MAAERERGGRERSRDREERD) are disordered. The region spanning 23-86 (FVDKLVHINR…EAAKRNLTRV (64 aa)) is the S5 DRBM domain.

This sequence belongs to the universal ribosomal protein uS5 family. As to quaternary structure, part of the 30S ribosomal subunit. Contacts proteins S4 and S8.

In terms of biological role, with S4 and S12 plays an important role in translational accuracy. Its function is as follows. Located at the back of the 30S subunit body where it stabilizes the conformation of the head with respect to the body. This chain is Small ribosomal subunit protein uS5, found in Rhodopseudomonas palustris (strain HaA2).